The following is a 60-amino-acid chain: MSELFSNDNIFLNVNVNSQNEAIEKAGKALVDSGAVTDAYIQVVSTFMGNGLAIPHGTDD.

In terms of domain architecture, PTS EIIA type-2 spans 2–60; the sequence is SELFSNDNIFLNVNVNSQNEAIEKAGKALVDSGAVTDAYIQVVSTFMGNGLAIPHGTDD. His56 serves as the catalytic Tele-phosphohistidine intermediate. At His56 the chain carries Phosphohistidine; by HPr.

Homodimer or homotrimer. Seems to be a monomer when not phosphorylated.

It is found in the cytoplasm. Its function is as follows. The phosphoenolpyruvate-dependent sugar phosphotransferase system (sugar PTS), a major carbohydrate active transport system, catalyzes the phosphorylation of incoming sugar substrates concomitantly with their translocation across the cell membrane. The enzyme II CmtAB PTS system is involved in D-mannitol transport. The protein is Mannitol-specific phosphotransferase enzyme IIA component of Staphylococcus aureus.